An 83-amino-acid polypeptide reads, in one-letter code: uncharacterized protein (83 aa).

The N-terminal stretch at 1–20 (MRRALTLAVLATCAVLPALA) is a signal peptide.

To P.denitrificans and M.extorquens MoxJ.

This is an uncharacterized protein from Paracoccus denitrificans.